A 330-amino-acid polypeptide reads, in one-letter code: Quinone oxidoreductase (330 aa).

Position 2 is an N-acetylalanine (Ala-2). Position 23 is an N6-acetyllysine (Lys-23). Residues Tyr-53, 158–161, Gly-181, His-200, Asn-229, 246–249, and 269–271 contribute to the NADP(+) site; these read SGGV, VGSK, and VTL. At Ser-248 the chain carries Phosphoserine.

It belongs to the zinc-containing alcohol dehydrogenase family. Quinone oxidoreductase subfamily. In terms of assembly, homotetramer.

The protein localises to the cytoplasm. The catalysed reaction is 2 a quinone + NADPH + H(+) = 2 a 1,4-benzosemiquinone + NADP(+). Does not have alcohol dehydrogenase activity. Binds NADP and acts through a one-electron transfer process. Orthoquinones, such as 1,2-naphthoquinone or 9,10-phenanthrenequinone, are the best substrates (in vitro). May act in the detoxification of xenobiotics. Interacts with (AU)-rich elements (ARE) in the 3'-UTR of target mRNA species and enhances their stability. NADPH binding interferes with mRNA binding. The polypeptide is Quinone oxidoreductase (CRYZ) (Lama guanicoe (Guanaco)).